We begin with the raw amino-acid sequence, 65 residues long: Large ribosomal subunit protein bL35c (65 aa).

Belongs to the bacterial ribosomal protein bL35 family.

The protein resides in the plastid. It is found in the cyanelle. The polypeptide is Large ribosomal subunit protein bL35c (rpl35) (Cyanophora paradoxa).